The chain runs to 273 residues: Dermonecrotic toxin LspaSicTox-alphaIA2i (273 aa).

His5 is an active-site residue. Glu25 and Asp27 together coordinate Mg(2+). His41 (nucleophile) is an active-site residue. Intrachain disulfides connect Cys45–Cys51 and Cys47–Cys190. Residue Asp85 coordinates Mg(2+).

It belongs to the arthropod phospholipase D family. Class II subfamily. It depends on Mg(2+) as a cofactor. As to expression, expressed by the venom gland.

The protein localises to the secreted. The enzyme catalyses an N-(acyl)-sphingosylphosphocholine = an N-(acyl)-sphingosyl-1,3-cyclic phosphate + choline. The catalysed reaction is an N-(acyl)-sphingosylphosphoethanolamine = an N-(acyl)-sphingosyl-1,3-cyclic phosphate + ethanolamine. It carries out the reaction a 1-acyl-sn-glycero-3-phosphocholine = a 1-acyl-sn-glycero-2,3-cyclic phosphate + choline. It catalyses the reaction a 1-acyl-sn-glycero-3-phosphoethanolamine = a 1-acyl-sn-glycero-2,3-cyclic phosphate + ethanolamine. Its function is as follows. Dermonecrotic toxins cleave the phosphodiester linkage between the phosphate and headgroup of certain phospholipids (sphingolipid and lysolipid substrates), forming an alcohol (often choline) and a cyclic phosphate. This toxin acts on sphingomyelin (SM). It may also act on ceramide phosphoethanolamine (CPE), lysophosphatidylcholine (LPC) and lysophosphatidylethanolamine (LPE), but not on lysophosphatidylserine (LPS), and lysophosphatidylglycerol (LPG). It acts by transphosphatidylation, releasing exclusively cyclic phosphate products as second products. Induces dermonecrosis, hemolysis, increased vascular permeability, edema, inflammatory response, and platelet aggregation. This is Dermonecrotic toxin LspaSicTox-alphaIA2i from Loxosceles spadicea (Recluse spider).